Consider the following 318-residue polypeptide: Ankyrin repeat and SOCS box protein 7 (318 aa).

ANK repeat units lie at residues 13–42 (QEEL…SPNG), 46–75 (NGWT…DPTV), 80–109 (GGFT…RSDI), 116–145 (DGWT…EVDP), 149–178 (KGTT…NIDI), 180–208 (NGFL…DTDL), and 213–242 (DGQT…DTNT). In terms of domain architecture, SOCS box spans 265–318 (LDFLQEVTRQPRNLQDLCRIKIRQCIGLQNLKLLDELPIAKVMKDYLKHKFDDI).

This sequence belongs to the ankyrin SOCS box (ASB) family. Interacts with CUL5. Interacts with RNF7. Interacts with PSRC1.

Its pathway is protein modification; protein ubiquitination. Its function is as follows. Probable substrate-recognition component of a SCF-like ECS (Elongin-Cullin-SOCS-box protein) E3 ubiquitin-protein ligase complex which mediates the ubiquitination and subsequent proteasomal degradation of target proteins. Plays a role in spindle dynamics and genome integrity by targeting the mitotic progression protein PSRC1 for proteasomal degradation in a cell cycle-dependent manner. Also participates in meiosis by mediating the proper attachment between kinetochores and microtubules. The protein is Ankyrin repeat and SOCS box protein 7 (ASB7) of Macaca fascicularis (Crab-eating macaque).